Here is a 616-residue protein sequence, read N- to C-terminus: Dihydroxy-acid dehydratase (616 aa).

Asp-81 is a Mg(2+) binding site. Cys-122 serves as a coordination point for [2Fe-2S] cluster. Positions 123 and 124 each coordinate Mg(2+). Lys-124 carries the post-translational modification N6-carboxylysine. Cys-195 contacts [2Fe-2S] cluster. Glu-491 is a binding site for Mg(2+). Ser-517 (proton acceptor) is an active-site residue.

This sequence belongs to the IlvD/Edd family. As to quaternary structure, homodimer. [2Fe-2S] cluster is required as a cofactor. Requires Mg(2+) as cofactor.

The catalysed reaction is (2R)-2,3-dihydroxy-3-methylbutanoate = 3-methyl-2-oxobutanoate + H2O. It catalyses the reaction (2R,3R)-2,3-dihydroxy-3-methylpentanoate = (S)-3-methyl-2-oxopentanoate + H2O. It functions in the pathway amino-acid biosynthesis; L-isoleucine biosynthesis; L-isoleucine from 2-oxobutanoate: step 3/4. It participates in amino-acid biosynthesis; L-valine biosynthesis; L-valine from pyruvate: step 3/4. Functionally, functions in the biosynthesis of branched-chain amino acids. Catalyzes the dehydration of (2R,3R)-2,3-dihydroxy-3-methylpentanoate (2,3-dihydroxy-3-methylvalerate) into 2-oxo-3-methylpentanoate (2-oxo-3-methylvalerate) and of (2R)-2,3-dihydroxy-3-methylbutanoate (2,3-dihydroxyisovalerate) into 2-oxo-3-methylbutanoate (2-oxoisovalerate), the penultimate precursor to L-isoleucine and L-valine, respectively. In Photorhabdus laumondii subsp. laumondii (strain DSM 15139 / CIP 105565 / TT01) (Photorhabdus luminescens subsp. laumondii), this protein is Dihydroxy-acid dehydratase.